A 254-amino-acid chain; its full sequence is Adenosine 5'-phosphosulfate reductase (254 aa).

Cys131, Cys132, Cys212, and Cys215 together coordinate [4Fe-4S] cluster. Cys238 (nucleophile; cysteine thiosulfonate intermediate) is an active-site residue.

Belongs to the PAPS reductase family. CysH subfamily. It depends on [4Fe-4S] cluster as a cofactor.

The protein resides in the cytoplasm. It catalyses the reaction [thioredoxin]-disulfide + sulfite + AMP + 2 H(+) = adenosine 5'-phosphosulfate + [thioredoxin]-dithiol. Its pathway is sulfur metabolism; hydrogen sulfide biosynthesis; sulfite from sulfate. In terms of biological role, catalyzes the formation of sulfite from adenosine 5'-phosphosulfate (APS) using thioredoxin as an electron donor. The polypeptide is Adenosine 5'-phosphosulfate reductase (Mesorhizobium japonicum (strain LMG 29417 / CECT 9101 / MAFF 303099) (Mesorhizobium loti (strain MAFF 303099))).